The primary structure comprises 568 residues: Glucose-6-phosphate isomerase, cytosolic 1 (568 aa).

The active-site Proton donor is the glutamate 360. Residues histidine 391 and lysine 516 contribute to the active site.

It belongs to the GPI family. Homodimer.

The protein resides in the cytoplasm. It carries out the reaction alpha-D-glucose 6-phosphate = beta-D-fructose 6-phosphate. It functions in the pathway carbohydrate degradation; glycolysis; D-glyceraldehyde 3-phosphate and glycerone phosphate from D-glucose: step 2/4. This is Glucose-6-phosphate isomerase, cytosolic 1 (PGIC1) from Clarkia williamsonii.